Consider the following 67-residue polypeptide: Alpha-like toxin Lqh3 (67 aa).

The LCN-type CS-alpha/beta domain occupies 2-66; that stretch reads RDGYIAQPEN…GIIVEGEKCH (65 aa). Disulfide bonds link Cys12–Cys65, Cys16–Cys37, Cys23–Cys47, and Cys27–Cys49. Serine amide is present on Ser67.

This sequence belongs to the long (4 C-C) scorpion toxin superfamily. Sodium channel inhibitor family. Alpha subfamily. In terms of assembly, monomer. As to expression, expressed by the venom gland.

It localises to the secreted. Its function is as follows. Alpha toxins bind voltage-independently at site-3 of sodium channels (Nav) and inhibit the inactivation of the activated channels, thereby blocking neuronal transmission. The dissociation is voltage-dependent. This alpha-like toxin is highly toxic to insects and competes with LqhaIT on binding to insect sodium channels. Differs from classical anti-mammalian alpha-toxins as it inhibits sodium channel inactivation in cell bodies of hippocampus brain neurons, on which the anti-mammalian Lqh2 is inactive, and is unable to affect Nav1.2 in the rat brain, on which Lqh2 is highly active. Moreover, its pharmacological properties are unique in that its binding affinity for insect channels drops &gt;30-fold at pH 8.5 versus pH 6.5, and its rate of association with receptor site-3 on both insect and mammalian sodium channels is 4-15-fold slower compared with LqhaIT and Lqh2. This chain is Alpha-like toxin Lqh3, found in Leiurus hebraeus (Hebrew deathstalker scorpion).